We begin with the raw amino-acid sequence, 1812 residues long: Protein virilizer homolog (1812 aa).

An N-acetylalanine modification is found at Ala-2. Disordered stretches follow at residues 132 to 302 (ISHD…EQIS) and 576 to 596 (KTSS…GLER). Phosphoserine occurs at positions 133 and 138. Over residues 139–152 (PPPPPPPPPPPQPQ) the composition is skewed to pro residues. The segment covering 160–169 (KHADGEKEDQ) has biased composition (basic and acidic residues). The residue at position 173 (Ser-173) is a Phosphoserine. Residues 174–190 (PPRPQPRGPRTPPGPPP) show a composition bias toward pro residues. Thr-184 is modified (phosphothreonine). Ser-222 carries the post-translational modification Phosphoserine. A compositionally biased stretch (polar residues) spans 224 to 233 (DRNSVPQEGQ). Composition is skewed to acidic residues over residues 234–266 (YSDE…EDED) and 274–302 (IPEE…EQIS). Basic and acidic residues predominate over residues 584-596 (SEPDHDTDAGLER). Tyr-914 is subject to Phosphotyrosine. Ser-1579 is subject to Phosphoserine. Disordered regions lie at residues 1616 to 1635 (HVVP…GIRP) and 1663 to 1812 (KEVV…SFTR). Residues 1689-1698 (GFSGNRGGRG) show a composition bias toward gly residues. Thr-1708 is subject to Phosphothreonine. The residue at position 1723 (Arg-1723) is an Omega-N-methylarginine. Residues 1723–1748 (RGSSWSAQNTPRGNYNESRGGQSNFN) show a composition bias toward polar residues. The residue at position 1741 (Arg-1741) is an Asymmetric dimethylarginine; alternate. Residue Arg-1741 is modified to Omega-N-methylarginine; alternate. Residues Arg-1773, Arg-1775, and Arg-1793 each carry the asymmetric dimethylarginine modification. A compositionally biased stretch (gly residues) spans 1788-1802 (GSGGSRGKFVSGGSG). The segment covering 1803–1812 (RGRHVRSFTR) has biased composition (basic residues).

It belongs to the vir family. In terms of assembly, component of the WMM complex, a N6-methyltransferase complex composed of a catalytic subcomplex, named MAC, and of an associated subcomplex, named MACOM. The MAC subcomplex is composed of METTL3 and METTL14. The MACOM subcomplex is composed of WTAP, ZC3H13, CBLL1/HAKAI, VIRMA, and, in some cases of RBM15 (RBM15 or RBM15B). Interacts with WTAP. Also a component of a MACOM-like complex, named WTAP complex, composed of WTAP, ZC3H13, CBLL1, VIRMA, RBM15, BCLAF1 and THRAP3. Interacts with NUDT21 and CPSF6.

Its subcellular location is the nucleus speckle. The protein resides in the nucleus. It localises to the nucleoplasm. The protein localises to the cytoplasm. In terms of biological role, associated component of the WMM complex, a complex that mediates N6-methyladenosine (m6A) methylation of RNAs, a modification that plays a role in the efficiency of mRNA splicing and RNA processing. Acts as a key regulator of m6A methylation by promoting m6A methylation of mRNAs in the 3'-UTR near the stop codon: recruits the catalytic core components METTL3 and METTL14, thereby guiding m6A methylation at specific sites. Required for mRNA polyadenylation via its role in selective m6A methylation: m6A methylation of mRNAs in the 3'-UTR near the stop codon correlating with alternative polyadenylation (APA). This chain is Protein virilizer homolog, found in Homo sapiens (Human).